Reading from the N-terminus, the 343-residue chain is MKDQLLKLRDEALAAIAAAADVGAIQEMRVRYLGKKSELSQVLGGLGRLPTVEERKAMGALGNEIKQAITAALDAREAELAAAALQARLASERIDVTLPGAPVRRGHLHILNQVIHRIEEIFIAMGYEVAESRQVETDWYNFEALNIPKGHPARDAQDSLFLSEEVLLRTHTSNTQIRYMLEVARGRTPVKIICPGRVFRRDFEDATHAMMFHQVEGLVIDKGITMASLKGALTEMARALFGPDVGIRLRPSYFPFTEPSAEMDISCIFCGGKGCRTCKGSGWIEIGGSGMVHPNVLRAGGYDPEEVSGWAFGYGPERVAMLMYGIEDIRHFVNNDMRFLRQF.

Glu258 is a Mg(2+) binding site.

This sequence belongs to the class-II aminoacyl-tRNA synthetase family. Phe-tRNA synthetase alpha subunit type 1 subfamily. In terms of assembly, tetramer of two alpha and two beta subunits. The cofactor is Mg(2+).

It is found in the cytoplasm. It carries out the reaction tRNA(Phe) + L-phenylalanine + ATP = L-phenylalanyl-tRNA(Phe) + AMP + diphosphate + H(+). This chain is Phenylalanine--tRNA ligase alpha subunit, found in Symbiobacterium thermophilum (strain DSM 24528 / JCM 14929 / IAM 14863 / T).